We begin with the raw amino-acid sequence, 325 residues long: Aldo-keto reductase family 1 member A1 (325 aa).

Ala2 is subject to N-acetylalanine. At Ser4 the chain carries Phosphoserine. NADP(+) is bound by residues 11 to 20 (GQKMPLIGLG), Thr21, and Trp22. Ser38 carries the phosphoserine modification. Asp45 provides a ligand contact to NADP(+). Catalysis depends on Tyr50, which acts as the Proton donor. An N6-acetyllysine; alternate modification is found at Lys127. Lys127 carries the N6-succinyllysine; alternate modification. The residue at position 145 (Lys145) is an N6-succinyllysine. Residues Ser162, Asn163, Ser211, Leu213, Ser215, Ser216, Lys263, Ser264, Ile265, Thr266, Arg269, Gln272, and Asn273 each coordinate NADP(+). Phosphoserine is present on Ser211.

This sequence belongs to the aldo/keto reductase family.

Its subcellular location is the cytoplasm. It is found in the cytosol. It localises to the apical cell membrane. The catalysed reaction is a primary alcohol + NADP(+) = an aldehyde + NADPH + H(+). The enzyme catalyses L-gulonate + NADP(+) = aldehydo-D-glucuronate + NADPH + H(+). It catalyses the reaction L-gulono-1,4-lactone + NADP(+) = D-glucurono-3,6-lactone + NADPH + H(+). It carries out the reaction allyl alcohol + NADP(+) = acrolein + NADPH + H(+). The catalysed reaction is glycerol + NADP(+) = D-glyceraldehyde + NADPH + H(+). The enzyme catalyses glycerol + NADP(+) = L-glyceraldehyde + NADPH + H(+). It catalyses the reaction hydroxyacetone + NADP(+) = methylglyoxal + NADPH + H(+). It carries out the reaction 3-deoxyfructose + NADP(+) = 3-deoxyglucosone + NADPH + H(+). The catalysed reaction is (R)-mevalonate + NADP(+) = (R)-mevaldate + NADPH + H(+). The enzyme catalyses pyridine 3-methanol + NADP(+) = pyridine-3-carbaldehyde + NADPH + H(+). It catalyses the reaction S-nitroso-CoA + NADPH + H(+) = sulfinamide-CoA + NADP(+). It carries out the reaction S-nitrosoglutathione + NADPH + H(+) = S-(hydroxysulfenamide)glutathione + NADP(+). In terms of biological role, catalyzes the NADPH-dependent reduction of a wide variety of carbonyl-containing compounds to their corresponding alcohols. Displays enzymatic activity towards endogenous metabolites such as aromatic and aliphatic aldehydes, ketones, monosaccharides and bile acids, with a preference for negatively charged substrates, such as glucuronate and succinic semialdehyde. Functions as a detoxifiying enzyme by reducing a range of toxic aldehydes. Reduces methylglyoxal and 3-deoxyglucosone, which are present at elevated levels under hyperglycemic conditions and are cytotoxic. Involved also in the detoxification of lipid-derived aldehydes like acrolein. Plays a role in the activation of procarcinogens, such as polycyclic aromatic hydrocarbon trans-dihydrodiols, and in the metabolism of various xenobiotics and drugs. Also acts as an inhibitor of protein S-nitrosylation by mediating degradation of S-nitroso-coenzyme A (S-nitroso-CoA), a cofactor required to S-nitrosylate proteins. S-nitroso-CoA reductase activity is involved in reprogramming intermediary metabolism in renal proximal tubules, notably by inhibiting protein S-nitrosylation of isoform 2 of PKM (PKM2). Also acts as a S-nitroso-glutathione reductase by catalyzing the NADPH-dependent reduction of S-nitrosoglutathione. Displays no reductase activity towards retinoids. The protein is Aldo-keto reductase family 1 member A1 (AKR1A1) of Pongo abelii (Sumatran orangutan).